Here is a 144-residue protein sequence, read N- to C-terminus: Peptidyl-Asp metalloendopeptidase (144 aa).

H64 serves as a coordination point for Zn(2+). E65 is a catalytic residue. H68 is a Zn(2+) binding site.

This sequence belongs to the peptidase M72 family. Zn(2+) is required as a cofactor.

The catalysed reaction is Cleavage of Xaa-|-Asp, Xaa-|-Glu and Xaa-|-cysteic acid bonds.. Metalloprotease, specifically cleaves on the N-terminal side of aspartyl, glutamyl and cysteic acid residues. The polypeptide is Peptidyl-Asp metalloendopeptidase (Pseudomonas fragi).